A 599-amino-acid chain; its full sequence is UvrABC system protein C (599 aa).

Residues 18–96 (QLPGVYKMLG…IKQHRPPYNI (79 aa)) enclose the GIY-YIG domain. The region spanning 207 to 242 (KELNQELIAKMEQAAADLEFEKAVFYRDRLSLLREV) is the UVR domain.

This sequence belongs to the UvrC family. Interacts with UvrB in an incision complex.

Its subcellular location is the cytoplasm. In terms of biological role, the UvrABC repair system catalyzes the recognition and processing of DNA lesions. UvrC both incises the 5' and 3' sides of the lesion. The N-terminal half is responsible for the 3' incision and the C-terminal half is responsible for the 5' incision. The chain is UvrABC system protein C from Acinetobacter baumannii (strain SDF).